The primary structure comprises 120 residues: Large ribosomal subunit protein bL20c (120 aa).

The protein belongs to the bacterial ribosomal protein bL20 family.

It localises to the plastid. In terms of biological role, binds directly to 23S ribosomal RNA and is necessary for the in vitro assembly process of the 50S ribosomal subunit. It is not involved in the protein synthesizing functions of that subunit. The polypeptide is Large ribosomal subunit protein bL20c (rpl20) (Cuscuta gronovii (Common dodder)).